The primary structure comprises 1063 residues: MASTTPITMEDLQKALEAQSRALRAELAAGASQLRRPRPPRQRDSSTSGDDSGRDSGGPRRRRGNRGRGQRKDWSKAPPPPEERQESRSQTPVPKPPRAPPQPPQPPRMQTGRGGTAPRPELGPPTNPFQAAVARGLRPPLHDPDTEAPTEACVTSWLWSEGEGAVFYRVDLHFTNLGTRPLDEDGRWDPALMYNPCGPEPPAHVVRAYNQPAGDVRGIWGKGERTYAEQDFRVGGTRWHRLLRMPVRGLDGDSAPLPPHTTERIETRSARHPWRIRFGAPQVFLAGLLLAAVAVGTARAGLQPRTDIAAPPAPPQAPRAHGKHYGHHHHQLPFLGHDGHHGGTLRVGQHHRNASDVLPGHWLQGSWGCYNLSDWHQGTHVCHTKHMDFWCVEHDRPPPVTPTPLTTAANSTTAATPATTPAPCHAGLNDSCGGFLSGCGPMRLRHGADTRCGRLICGLSTTAQYPPTRFGCTMRWGLPPWELVVLTARPEDGWTCRGVPAHPGTRCPELVSPMGHATCSPASALWLATANALSLDHALAAVVLLVPWVLIFMLCRRACRRRGAAAALTAVVLQGYNPPAYGEEAFTYLCTAPGCATQTPVPVRLAGVRFESKIVDGGCFAPWDLEATGACICEIPTDVSCEGLGAWVPAAPCARIWNGTQRACTFWAVNAYSSGGYAQLASYFNPGGSYYKQYHPTACDVEPAFGHSDAACWGFPTDTVMSVFALASYVQHPDKTVRVKFHTETRTVWQLSVAGVSCNVTTEHPFCNTPHGQLEVQVPPDPGDLVEYIMNYTGNQQSRWGLGSPNCHGPDWASPVCQRHSPDCSRLVGATPERPRLRLVDADDPLLRTAPGPGEVWVTPVIGSQARKCGLHIRAGPYGHATVEMPEWIHAHTTSDPWHPPGPLGLKFKTVRPVALPRALAPPRNVRVTGCYQCGTPALVEGLAPGGGNCHLTVNGEDVGAFPPGKFVTAALLNTPPPYQVSCGGESDRASARVIDPAAQSFTGVVYGTHTTAVSETRQTWAEWAAAHWWQLTLGAICALLLAGLLACCAKCLYHLRGAIAPR.

Residues 23 to 131 are disordered; sequence LRAELAAGAS…LGPPTNPFQA (109 aa). Positions 30–69 are human C1QBP/SF2P32-binding; the sequence is GASQLRRPRPPRQRDSSTSGDDSGRDSGGPRRRRGNRGRG. Position 46 is a phosphoserine; by host (Ser46). Residues 59–69 show a composition bias toward basic residues; the sequence is PRRRRGNRGRG. Residues 70 to 87 show a composition bias toward basic and acidic residues; sequence QRKDWSKAPPPPEERQES. Positions 93-107 are enriched in pro residues; sequence VPKPPRAPPQPPQPP. Cys153 and Cys197 are disulfide-bonded. Residues 279–300 are functions as E2 signal peptide; it reads GAPQVFLAGLLLAAVAVGTARA. At 301-534 the chain is on the extracellular side; the sequence is GLQPRTDIAA…LWLATANALS (234 aa). The segment at 305 to 327 is disordered; that stretch reads RTDIAAPPAPPQAPRAHGKHYGH. Residues Asn353, Asn371, Asn410, and Asn429 are each glycosylated (N-linked (GlcNAc...) asparagine; by host). A helical transmembrane segment spans residues 535–555; the sequence is LDHALAAVVLLVPWVLIFMLC. Topologically, residues 556-582 are cytoplasmic; the sequence is RRACRRRGAAAALTAVVLQGYNPPAYG. The functions as E1 signal peptide stretch occupies residues 562-582; that stretch reads RGAAAALTAVVLQGYNPPAYG. Over 583-1028 the chain is Extracellular; the sequence is EEAFTYLCTA…QTWAEWAAAH (446 aa). Disulfide bonds link Cys590–Cys595, Cys619–Cys824, Cys641–Cys653, Cys699–Cys712, Cys758–Cys767, Cys807–Cys817, Cys931–Cys934, and Cys950–Cys983. N-linked (GlcNAc...) asparagine; by host glycosylation occurs at Asn658. Asn670 and Ala671 together coordinate Ca(2+). Residues Asp718 and Thr719 each contribute to the Ca(2+) site. N-linked (GlcNAc...) asparagine; by host glycans are attached at residues Asn759 and Asn791. Thr1011 and Thr1012 each carry an O-linked (GalNAc...) threonine; by host glycan. The chain crosses the membrane as a helical span at residues 1029–1049; sequence WWQLTLGAICALLLAGLLACC. Residues 1050-1063 lie on the Extracellular side of the membrane; it reads AKCLYHLRGAIAPR.

Homodimer; further assembles into homooligomer. Interacts with human C1QBP. Interacts (via N-terminus) with protease/methyltransferase p150. In terms of assembly, heterodimer with spike glycoprotein E2. As to quaternary structure, heterodimer with spike glycoprotein E1. In terms of processing, structural polyprotein: Specific enzymatic cleavages in vivo yield mature proteins. Two signal peptidase-mediated cleavages within the polyprotein produce the structural proteins capsid, E2, and E1. The E2 signal peptide remains attached to the C-terminus of the capsid protein after cleavage by the signal peptidase. Another signal peptide at E2 C-terminus directs E1 to the ER, with a similar mechanism. Contains three N-linked oligosaccharides. Post-translationally, capsid is phosphorylated on Ser-46 by host. This phosphorylation negatively regulates capsid protein RNA-binding activity. Dephosphorylated by human PP1A.

Its subcellular location is the virion. The protein localises to the host cytoplasm. It localises to the host mitochondrion. It is found in the virion membrane. The protein resides in the host Golgi apparatus membrane. Functionally, capsid protein interacts with genomic RNA and assembles into icosahedric core particles 65-70 nm in diameter. The resulting nucleocapsid eventually associates with the cytoplasmic domain of E2 at the cell membrane, leading to budding and formation of mature virions from host Golgi membranes. Phosphorylation negatively regulates RNA-binding activity, possibly delaying virion assembly during the viral replication phase. Capsid protein dimerizes and becomes disulfide-linked in the virion. Modulates genomic RNA replication. Modulates subgenomic RNA synthesis by interacting with human C1QBP/SF2P32. Induces both perinuclear clustering of mitochondria and the formation of electron-dense intermitochondrial plaques, both hallmarks of rubella virus infected cells. Induces apoptosis when expressed in transfected cells. Its function is as follows. Responsible for viral attachment to target host cell, by binding to the cell receptor. Its transport to the plasma membrane depends on interaction with E1 protein. The surface glycoproteins display an irregular helical organization and a pseudo-tetrameric inner nucleocapsid arrangement. Class II viral fusion protein. Fusion activity is inactive as long as E1 is bound to E2 in mature virion. After virus attachment to target cell and clathrin-mediated endocytosis, acidification of the endosome would induce dissociation of E1/E2 heterodimer and concomitant trimerization of the E1 subunits. This E1 homotrimer is fusion active, and promotes release of viral nucleocapsid in cytoplasm after endosome and viral membrane fusion. The cytoplasmic tail of spike glycoprotein E1 modulates virus release. The surface glycoproteins display an irregular helical organization and a pseudo-tetrameric inner nucleocapsid arrangement. The polypeptide is Structural polyprotein (Homo sapiens (Human)).